A 156-amino-acid polypeptide reads, in one-letter code: Ribosomal RNA large subunit methyltransferase H (156 aa).

S-adenosyl-L-methionine-binding positions include Leu-73, Gly-104, and Ile-123–Leu-128.

Belongs to the RNA methyltransferase RlmH family. Homodimer.

Its subcellular location is the cytoplasm. The enzyme catalyses pseudouridine(1915) in 23S rRNA + S-adenosyl-L-methionine = N(3)-methylpseudouridine(1915) in 23S rRNA + S-adenosyl-L-homocysteine + H(+). Specifically methylates the pseudouridine at position 1915 (m3Psi1915) in 23S rRNA. This Xanthomonas campestris pv. campestris (strain 8004) protein is Ribosomal RNA large subunit methyltransferase H.